We begin with the raw amino-acid sequence, 2424 residues long: Voltage-dependent P/Q-type calcium channel subunit alpha-1A (2424 aa).

Over M1 to P98 the chain is Cytoplasmic. The stretch at N85–F363 is one I repeat. A helical membrane pass occupies residues P99–L117. Topologically, residues E118–D135 are extracellular. Residues T136 to L155 traverse the membrane as a helical segment. The Cytoplasmic portion of the chain corresponds to G156–N167. Residues G168–V185 form a helical membrane-spanning segment. Over G186–D190 the chain is Extracellular. A helical membrane pass occupies residues L191 to I209. Residues P210–Q228 are Cytoplasmic-facing. The chain crosses the membrane as a helical span at residues I229–Y248. The Extracellular segment spans residues M249–W335. The N-linked (GlcNAc...) asparagine glycan is linked to N283. E318 contributes to the Ca(2+) binding site. The chain crosses the membrane as a helical span at residues N336 to S360. Residues G361–Q487 are Cytoplasmic-facing. The binding to the beta subunit stretch occupies residues Q383–E400. T409 carries the post-translational modification Phosphothreonine. Residues S448 and S451 each carry the phosphoserine modification. An II repeat occupies E473–L717. The chain crosses the membrane as a helical span at residues A488 to I506. Over V507 to Y521 the chain is Extracellular. Residues A522 to L541 form a helical membrane-spanning segment. At G542–S549 the chain is on the cytoplasmic side. The chain crosses the membrane as a helical span at residues S550–W568. At A569–G578 the chain is on the extracellular side. The chain crosses the membrane as a helical span at residues I579–W597. The Cytoplasmic portion of the chain corresponds to A598–S616. A helical transmembrane segment spans residues L617–F636. Over G637–V689 the chain is Extracellular. E668 contacts Ca(2+). Residues F690–V714 form a helical membrane-spanning segment. Over D715–R1253 the chain is Cytoplasmic. Phosphoserine occurs at positions 750, 753, and 790. The disordered stretch occupies residues H819–P1229. Basic and acidic residues-rich tracts occupy residues E893–G912, E922–P931, and R969–E996. Positions P1053–L1065 are enriched in polar residues. 2 positions are modified to phosphoserine: S1091 and S1104. Low complexity predominate over residues S1110–N1140. Residues E1151–K1168 are compositionally biased toward polar residues. The segment covering L1204–E1214 has biased composition (basic and acidic residues). Residues N1240–F1523 form an III repeat. The chain crosses the membrane as a helical span at residues Y1254–A1272. Residues E1273–Y1288 are Extracellular-facing. A helical membrane pass occupies residues F1289–L1308. Residues G1309–D1320 are Cytoplasmic-facing. The helical transmembrane segment at L1321 to F1339 threads the bilayer. The Extracellular portion of the chain corresponds to T1340–T1350. Residues I1351–L1369 traverse the membrane as a helical segment. Topologically, residues P1370–N1388 are cytoplasmic. A helical transmembrane segment spans residues I1389 to F1408. The Extracellular portion of the chain corresponds to K1409–E1495. E1469 serves as a coordination point for Ca(2+). The helical transmembrane segment at M1496–I1520 threads the bilayer. The Cytoplasmic segment spans residues I1521–P1575. The stretch at N1560–F1823 is one IV repeat. A helical membrane pass occupies residues P1576–D1604. Residues N1605–V1609 lie on the Extracellular side of the membrane. A helical membrane pass occupies residues F1610–F1629. Over G1630–D1637 the chain is Cytoplasmic. The helical transmembrane segment at A1638–V1656 threads the bilayer. The Extracellular portion of the chain corresponds to T1657–N1665. N1665 carries an N-linked (GlcNAc...) asparagine glycan. A helical transmembrane segment spans residues L1666–G1684. Topologically, residues Y1685–Y1703 are cytoplasmic. Residues V1704–F1723 traverse the membrane as a helical segment. Over G1724 to F1795 the chain is Extracellular. The helical transmembrane segment at A1796 to M1820 threads the bilayer. The Cytoplasmic portion of the chain corresponds to D1821–P2424. At T1993 the chain carries Phosphothreonine. The tract at residues F1997–P2424 is disordered. The segment covering S2037–W2053 has biased composition (polar residues). S2054, S2072, S2084, S2086, S2127, and S2148 each carry phosphoserine. Residues E2074–L2090 are compositionally biased toward basic and acidic residues. 2 stretches are compositionally biased toward basic and acidic residues: residues R2142 to R2159 and P2200 to R2210. Over residues P2211 to G2229 the composition is skewed to basic residues. Residues V2249–H2262 are compositionally biased toward low complexity. The segment covering R2280–R2305 has biased composition (basic residues).

The protein belongs to the calcium channel alpha-1 subunit (TC 1.A.1.11) family. CACNA1A subfamily. Voltage-dependent calcium channels are multisubunit complexes, consisting of alpha-1, alpha-2, beta and delta subunits in a 1:1:1:1 ratio. The channel activity is directed by the pore-forming and voltage-sensitive alpha-1 subunit. In many cases, this subunit is sufficient to generate voltage-sensitive calcium channel activity. The auxiliary subunits beta and alpha-2/delta linked by a disulfide bridge regulate the channel activity. Interacts with CABP1. Interacts with the spider omega-agatoxin-IVA (AC P30288). Interacts with TSPOAP1. Brain specific. Purkinje cells contain predominantly P-type VSCC, the Q-type being a prominent calcium current in cerebellar granule cells.

The protein resides in the cell membrane. The enzyme catalyses Ca(2+)(in) = Ca(2+)(out). Its function is as follows. Voltage-sensitive calcium channels (VSCC) mediate the entry of calcium ions into excitable cells and are also involved in a variety of calcium-dependent processes, including muscle contraction, hormone or neurotransmitter release, gene expression, cell motility, cell division and cell death. The isoform alpha-1A gives rise to P and/or Q-type calcium currents. P/Q-type calcium channels belong to the 'high-voltage activated' (HVA) group and are specifically blocked by the spider omega-agatoxin-IVA (AC P54282). They are however insensitive to dihydropyridines (DHP). This is Voltage-dependent P/Q-type calcium channel subunit alpha-1A (CACNA1A) from Oryctolagus cuniculus (Rabbit).